Consider the following 41-residue polypeptide: Photosystem II reaction center protein L (41 aa).

A helical transmembrane segment spans residues 20-40 (SLYWGLLLIFVLAVPFSNYFF).

The protein belongs to the PsbL family. In terms of assembly, PSII is composed of 1 copy each of membrane proteins PsbA, PsbB, PsbC, PsbD, PsbE, PsbF, PsbH, PsbI, PsbJ, PsbK, PsbL, PsbM, PsbT, PsbX, PsbY, PsbZ, Psb30/Ycf12, at least 3 peripheral proteins of the oxygen-evolving complex and a large number of cofactors. It forms dimeric complexes.

It localises to the plastid. Its subcellular location is the chloroplast thylakoid membrane. One of the components of the core complex of photosystem II (PSII). PSII is a light-driven water:plastoquinone oxidoreductase that uses light energy to abstract electrons from H(2)O, generating O(2) and a proton gradient subsequently used for ATP formation. It consists of a core antenna complex that captures photons, and an electron transfer chain that converts photonic excitation into a charge separation. This subunit is found at the monomer-monomer interface and is required for correct PSII assembly and/or dimerization. In Pinus koraiensis (Korean pine), this protein is Photosystem II reaction center protein L.